Consider the following 963-residue polypeptide: Reversion-inducing cysteine-rich protein with Kazal motifs (963 aa).

The N-terminal stretch at 1 to 28 is a signal peptide; that stretch reads MAAAVAAWPWALFCLAAVPPLLSPGAAG. The stretch at 31–78 is one Knot 1 repeat; the sequence is CCYHAKDNLMCRDVCEQILSSKSDSRLKHLLQRAPEYCPESMGEVWGC. A 5 X Knot repeats region spans residues 31–332; the sequence is CCYHAKDNLM…NAVEVSMLTC (302 aa). Asparagine 80 is a glycosylation site (N-linked (GlcNAc...) asparagine). Knot repeat units lie at residues 98 to 135 and 145 to 191; these read CCELAIAVECRQACKQASSKNDILKVCRKEYENALFSC and CCSY…LIHC. A glycan (N-linked (GlcNAc...) asparagine) is linked at asparagine 194. 2 Knot repeats span residues 210–257 and 286–332; these read CCDR…LWQC and CCSK…MLTC. Residues asparagine 291 and asparagine 346 are each glycosylated (N-linked (GlcNAc...) asparagine). 3 consecutive Kazal-like domains span residues 621–667, 692–746, and 749–783; these read KFTG…SCIS, SFGK…PCQP, and KSVEPVCGHNGETYSSVCAAYSDRVAVDYYGHCQA. 6 cysteine pairs are disulfide-bonded: cysteine 627–cysteine 652, cysteine 629–cysteine 648, cysteine 637–cysteine 665, cysteine 710–cysteine 729, cysteine 718–cysteine 744, and cysteine 755–cysteine 781. Serine 936 carries GPI-anchor amidated serine lipidation. Residues 937-963 constitute a propeptide that is removed on maturation; sequence PSVKVGPVLHCLFISFSFTLLKLMDYI.

This sequence belongs to the RECK family. In terms of assembly, interacts (via knot repeats) with WNT7A (via disordered linker region); the interaction is direct. Interacts (via knot repeats) with WNT7B (via disordered linker region); the interaction is direct. Interacts with ADGRA2; the interaction is direct. Post-translationally, localizes to the plasma membrane via its GPI-anchor. Released from the plasma membrane following cleavage of the GPI-anchor by GDPD5/GPE2.

The protein resides in the cell membrane. In terms of biological role, functions together with ADGRA2 to enable brain endothelial cells to selectively respond to Wnt7 signals (WNT7A or WNT7B). Plays a key role in Wnt7-specific responses: required for central nervous system (CNS) angiogenesis and blood-brain barrier regulation. Acts as a Wnt7-specific coactivator of canonical Wnt signaling by decoding Wnt ligands: acts by interacting specifically with the disordered linker region of Wnt7, thereby conferring ligand selectivity for Wnt7. ADGRA2 is then required to deliver RECK-bound Wnt7 to frizzled by assembling a higher-order RECK-ADGRA2-Fzd-LRP5-LRP6 complex. Also acts as a serine protease inhibitor. The protein is Reversion-inducing cysteine-rich protein with Kazal motifs of Gallus gallus (Chicken).